The following is a 250-amino-acid chain: Leucyl/phenylalanyl-tRNA--protein transferase (250 aa).

This sequence belongs to the L/F-transferase family.

Its subcellular location is the cytoplasm. The enzyme catalyses N-terminal L-lysyl-[protein] + L-leucyl-tRNA(Leu) = N-terminal L-leucyl-L-lysyl-[protein] + tRNA(Leu) + H(+). The catalysed reaction is N-terminal L-arginyl-[protein] + L-leucyl-tRNA(Leu) = N-terminal L-leucyl-L-arginyl-[protein] + tRNA(Leu) + H(+). It carries out the reaction L-phenylalanyl-tRNA(Phe) + an N-terminal L-alpha-aminoacyl-[protein] = an N-terminal L-phenylalanyl-L-alpha-aminoacyl-[protein] + tRNA(Phe). In terms of biological role, functions in the N-end rule pathway of protein degradation where it conjugates Leu, Phe and, less efficiently, Met from aminoacyl-tRNAs to the N-termini of proteins containing an N-terminal arginine or lysine. The protein is Leucyl/phenylalanyl-tRNA--protein transferase of Cupriavidus pinatubonensis (strain JMP 134 / LMG 1197) (Cupriavidus necator (strain JMP 134)).